A 453-amino-acid polypeptide reads, in one-letter code: Argininosuccinate lyase (453 aa).

It belongs to the lyase 1 family. Argininosuccinate lyase subfamily.

The protein resides in the cytoplasm. The catalysed reaction is 2-(N(omega)-L-arginino)succinate = fumarate + L-arginine. It participates in amino-acid biosynthesis; L-arginine biosynthesis; L-arginine from L-ornithine and carbamoyl phosphate: step 3/3. This Shewanella loihica (strain ATCC BAA-1088 / PV-4) protein is Argininosuccinate lyase.